Here is a 205-residue protein sequence, read N- to C-terminus: Probable peptidyl-tRNA hydrolase 2 (205 aa).

A compositionally biased stretch (polar residues) spans 40–49 (YSSKNANKAS). Residues 40–68 (YSSKNANKASNPEKESPVSVSNDEDSESE) form a disordered region. Phosphoserine occurs at positions 65 and 79.

This sequence belongs to the PTH2 family.

The enzyme catalyses an N-acyl-L-alpha-aminoacyl-tRNA + H2O = an N-acyl-L-amino acid + a tRNA + H(+). In terms of biological role, the natural substrate for this enzyme may be peptidyl-tRNAs which drop off the ribosome during protein synthesis. The chain is Probable peptidyl-tRNA hydrolase 2 from Schizosaccharomyces pombe (strain 972 / ATCC 24843) (Fission yeast).